The primary structure comprises 84 residues: Acyl carrier protein MbtL (84 aa).

The Carrier domain maps to serine 6–tyrosine 81. An O-(pantetheine 4'-phosphoryl)serine modification is found at serine 41.

Post-translationally, 4'-phosphopantetheine is transferred from CoA to a specific serine of apo-ACP, leading to the activated holo-ACP form.

Its subcellular location is the cytoplasm. The protein operates within siderophore biosynthesis; mycobactin biosynthesis. In terms of biological role, acyl carrier protein involved in the formation of acyl-S-ACP intermediates within the mycobactin biosynthesis process. The aliphatic chains carried by ACP are subsequently transferred on to the mycobactin core by MbtK. This is Acyl carrier protein MbtL (mbtL) from Mycobacterium bovis (strain ATCC BAA-935 / AF2122/97).